We begin with the raw amino-acid sequence, 209 residues long: MKKGILGKKLGMTQIFNEEGKVVPVTVIEAGPCVVIQKKTSEKEGYDAIQVGFGTIREKLVNKPLKGHFAKGNVELKRFVKEFRLEDTSSYEVGAEIKADIFAAGEKVDVSGVSKGKGFQGTIRRWGAHRGPMSHGSKFHRAVGSMGGSSDPSRTFKSKKMPGHMGHVNTTVLNVEVAKVIPEKNLILIKGGVPGPNKSFVVIKNSVKA.

The tract at residues 141–164 (RAVGSMGGSSDPSRTFKSKKMPGH) is disordered.

Belongs to the universal ribosomal protein uL3 family. As to quaternary structure, part of the 50S ribosomal subunit. Forms a cluster with proteins L14 and L19.

Functionally, one of the primary rRNA binding proteins, it binds directly near the 3'-end of the 23S rRNA, where it nucleates assembly of the 50S subunit. This Clostridium acetobutylicum (strain ATCC 824 / DSM 792 / JCM 1419 / IAM 19013 / LMG 5710 / NBRC 13948 / NRRL B-527 / VKM B-1787 / 2291 / W) protein is Large ribosomal subunit protein uL3.